A 192-amino-acid polypeptide reads, in one-letter code: Peptide deformylase (192 aa).

Cys108 and His150 together coordinate Fe cation. Residue Glu151 is part of the active site. Position 154 (His154) interacts with Fe cation.

The protein belongs to the polypeptide deformylase family. Fe(2+) serves as cofactor.

It carries out the reaction N-terminal N-formyl-L-methionyl-[peptide] + H2O = N-terminal L-methionyl-[peptide] + formate. Its function is as follows. Removes the formyl group from the N-terminal Met of newly synthesized proteins. Requires at least a dipeptide for an efficient rate of reaction. N-terminal L-methionine is a prerequisite for activity but the enzyme has broad specificity at other positions. This chain is Peptide deformylase, found in Opitutus terrae (strain DSM 11246 / JCM 15787 / PB90-1).